Reading from the N-terminus, the 280-residue chain is Tumor necrosis factor ligand superfamily member 6 (280 aa).

The Cytoplasmic portion of the chain corresponds to 1–80 (MQQPFNYPYP…KKRGNHSTGL (80 aa)). Positions 20-70 (SSPWAPPGTVLPCPTSVPRRPGQRRPPPPPPPPPLPPPPPSPLPPLPLPPL) are disordered. Pro residues predominate over residues 43 to 69 (RRPPPPPPPPPLPPPPPSPLPPLPLPP). Residues 81–101 (CLLVMFFMVLVALVGLGLGMF) traverse the membrane as a helical; Signal-anchor for type II membrane protein segment. Residues 102-280 (QLFHLQKELA…SQTFFGLYKL (179 aa)) are Extracellular-facing. Positions 117-155 (TSQKHTASSLEKQIGHPSPPPEKKEQRKVAHLTGKPNSR) are disordered. The 137-residue stretch at 144–280 (KVAHLTGKPN…SQTFFGLYKL (137 aa)) folds into the THD domain. N-linked (GlcNAc...) asparagine glycosylation occurs at Asn183. The cysteines at positions 201 and 232 are disulfide-linked. 2 N-linked (GlcNAc...) asparagine glycosylation sites follow: Asn249 and Asn259.

Belongs to the tumor necrosis factor family. Homotrimer. Interacts with ARHGAP9, BAIAP2L1, BTK, CACNB3, CACNB4, CRK, DLG2, DNMBP, DOCK4, EPS8L3, FGR, FYB1, FYN, HCK, ITK, ITSN2, KALRN, LYN, MACC1, MIA, MPP4, MYO15A, NCF1, NCK1, NCK2, NCKIPSD, OSTF1, PIK3R1, PSTPIP1, RIMBP3C, SAMSN1, SH3GL3, SH3PXD2B, SH3PXD2A, SH3RF2, SKAP2, SNX33, SNX9, SORBS3, SPTA1, SRC, SRGAP1, SRGAP2, SRGAP3, TEC, TJP3 and YES1. Post-translationally, the soluble form derives from the membrane form by proteolytic processing. The membrane-bound form undergoes two successive intramembrane proteolytic cleavages. The first one is processed by ADAM10 producing an N-terminal fragment, which lacks the receptor-binding extracellular domain. This ADAM10-processed FasL (FasL APL) remnant form is still membrane anchored and further processed by SPPL2A that liberates the FasL intracellular domain (FasL ICD). FasL shedding by ADAM10 is a prerequisite for subsequent intramembrane cleavage by SPPL2A in T-cells. Phosphorylated by FGR on tyrosine residues; this is required for ubiquitination and subsequent internalization. In terms of processing, N-glycosylated. Glycosylation enhances apoptotic activity. Post-translationally, monoubiquitinated.

Its subcellular location is the cell membrane. The protein resides in the cytoplasmic vesicle lumen. It is found in the lysosome lumen. It localises to the secreted. The protein localises to the nucleus. In terms of biological role, cytokine that binds to TNFRSF6/FAS, a receptor that transduces the apoptotic signal into cells. Involved in cytotoxic T-cell-mediated apoptosis, natural killer cell-mediated apoptosis and in T-cell development. Initiates fratricidal/suicidal activation-induced cell death (AICD) in antigen-activated T-cells contributing to the termination of immune responses. TNFRSF6/FAS-mediated apoptosis has also a role in the induction of peripheral tolerance. Binds to TNFRSF6B/DcR3, a decoy receptor that blocks apoptosis. Functionally, induces FAS-mediated activation of NF-kappa-B, initiating non-apoptotic signaling pathways. Can induce apoptosis but does not appear to be essential for this process. Its function is as follows. Cytoplasmic form induces gene transcription inhibition. The chain is Tumor necrosis factor ligand superfamily member 6 (FASLG) from Macaca fascicularis (Crab-eating macaque).